The chain runs to 295 residues: Glutamyl-Q tRNA(Asp) synthetase (295 aa).

L-glutamate is bound by residues 9 to 13 (RFAPT) and E45. A 'HIGH' region motif is present at residues 12–22 (PTPSGFLHFGS). The Zn(2+) site is built by C101, C103, Y115, and C119. L-glutamate-binding residues include Y172 and R190. The 'KMSKS' region signature appears at 228–232 (KLGKS). Residue K231 coordinates ATP.

This sequence belongs to the class-I aminoacyl-tRNA synthetase family. GluQ subfamily. Zn(2+) serves as cofactor.

Functionally, catalyzes the tRNA-independent activation of glutamate in presence of ATP and the subsequent transfer of glutamate onto a tRNA(Asp). Glutamate is transferred on the 2-amino-5-(4,5-dihydroxy-2-cyclopenten-1-yl) moiety of the queuosine in the wobble position of the QUC anticodon. The chain is Glutamyl-Q tRNA(Asp) synthetase from Pseudomonas putida (strain GB-1).